Consider the following 2079-residue polypeptide: Non-reducing polyketide synthase Dhc5 (2079 aa).

Residues 9 to 246 (LLFGDVTDPW…DELNIHALQH (238 aa)) form an N-terminal acylcarrier protein transacylase domain (SAT) region. A Ketosynthase family 3 (KS3) domain is found at 366–798 (NDGIAIVGMA…GGNACLLLED (433 aa)). Active-site for beta-ketoacyl synthase activity residues include cysteine 543, histidine 678, and histidine 717. Residues 895–1199 (VFVFTGQGSH…MTHSLQPKTS (305 aa)) form a malonyl-CoA:ACP transacylase (MAT) domain region. Serine 986 serves as the catalytic For acyl/malonyl transferase activity. The tract at residues 1268 to 1414 (EPLISTCAQY…DPTRSQVEWD (147 aa)) is N-terminal hotdog fold. The 317-residue stretch at 1268-1584 (EPLISTCAQY…YQELPRATWK (317 aa)) folds into the PKS/mFAS DH domain. The segment at 1304 to 1581 (MDGHKMQGIG…DIRYQELPRA (278 aa)) is product template (PT) domain. The tract at residues 1435–1584 (RGHRMQPEVF…YQELPRATWK (150 aa)) is C-terminal hotdog fold. The disordered stretch occupies residues 1613–1639 (RELQQPSSATVPAQETTIDEPEQQEGE). Residues 1615-1628 (LQQPSSATVPAQET) show a composition bias toward polar residues. The Carrier domain occupies 1641 to 1718 (AAGARLFNAI…DLRKEFRANE (78 aa)). Serine 1678 is subject to O-(pantetheine 4'-phosphoryl)serine. The segment at 1721–1784 (VENPRFSATP…EQKRPVKIDD (64 aa)) is disordered. Residues 1727–1757 (SATPSSAEASIPSSPSSLAHPMSDSASSLSP) are compositionally biased toward low complexity. Positions 1758–1784 (SDREEALPLERQSMTKREQKRPVKIDD) are enriched in basic and acidic residues. The segment at 1812-2057 (ADGTGTIATY…LSVAGDHLDL (246 aa)) is thioesterase (TE) domain. Catalysis depends on histidine 2064, which acts as the For thioesterase activity.

It participates in mycotoxin biosynthesis. Functionally, highly reducing polyketide synthase; part of the gene cluster that mediates the biosynthesis of 10,11-dehydrocurvularin, a prevalent fungal phytotoxin with heat shock response and immune-modulatory activities. The highly reducing polyketide synthase Dhc3 is responsible for biosynthesis up to the tetraketide stage. The non-reducing polyketide synthase Dhc5 then conducts four additional chain extension cycles, producing the unreduced part of the nascent octaketide from C-1 to C-8 in 10,11-dehydrocurvularin. The sequence is that of Non-reducing polyketide synthase Dhc5 from Alternaria cinerariae.